A 197-amino-acid chain; its full sequence is MYDKLPPELWVKIVDYSREINLLLVNKNFFELFNLVDIEIDIIDYVIENNLICVLNFIVALKKLEHPIIDKIVVTDLLNKCLIGYCISGRLDIVKYLVILGADIRENDDCVVRTACHNGHIEVVKYLVNQGADIRAYDDDAIRLASKNGHLYVVKYLVSQGVNFRKYNDYEINWASQNGHGSVVDFLVSKGAVLHEK.

ANK repeat units lie at residues 78–106, 107–136, 138–166, and 168–196; these read LNKCLIGYCISGRLDIVKYLVILGADIRE, NDDCVVRTACHNGHIEVVKYLVNQGADIRA, DDDAIRLASKNGHLYVVKYLVSQGVNFRK, and NDYEINWASQNGHGSVVDFLVSKGAVLHE.

The sequence is that of Putative ankyrin repeat protein R875 from Acanthamoeba polyphaga mimivirus (APMV).